The sequence spans 594 residues: MISPIGGLSQALHSPSDSIFVASLPRDIQVAEIAPQTKVLRSRLWDRLKFEVEYGRRRGTTSNSYLIQADHTALIDPPGESFCDLYLAELPKYLDLAQLDYIVASHVNPNRMVTLEQLLRRATKAKLICSRPAAKVLKATFPHWEERFQTVRSQDMLDLGRGHKLQLMTLPTPRWPDGLCAYDAGSQILFSDKLFGTHVCGDAIFDEDWRQLGGDRRFYFDCLHAPQTRQVETALDQFDPLTLKMIAPGHGPLVRFSLSRLYSDYRQWCQQQPSQTLKVALIYASAYGNTATMARAIAQGLVKAGVAVETINCEIAEPNEIVEAIQACDGFIVGSPTLGSHAPVQIQTALGIVLSSATKTKLAGVFGSYGWSGEAIDLIENKLKDGGYRFGFEAIRIQFSPNLDALDVCTTSGANFARQLRTHKRQRIARQATTETQADRTQQAVGRIIGSIGVVTTQTTGRHQGILTSWVSQASFTPPGIMLAIPGEFDAYGLAGQNKAFVLNLLQEGRSVRRHFDHQPLPKDGDNPFSRLEHYSTQNGCLILAEALAYLECLVQSWSNIGDHVLVYATVQAGQVLQPNGITAIRHRKSGGQY.

The tract at residues 57 to 250 (RRGTTSNSYL…LTLKMIAPGH (194 aa)) is zinc metallo-hydrolase. Residues 279–417 (VALIYASAYG…VCTTSGANFA (139 aa)) form the Flavodoxin-like domain. Residues 445–594 (VGRIIGSIGV…IRHRKSGGQY (150 aa)) form a flavodoxin-reductase-like region.

It in the N-terminal section; belongs to the zinc metallo-hydrolase group 3 family. The protein in the C-terminal section; belongs to the flavodoxin reductase family. Requires Fe cation as cofactor.

In terms of biological role, mediates electron transfer from NADH to oxygen, reducing it to water. This modular protein has 3 redox cofactors, in other organisms the same activity requires 2 or 3 proteins. In Synechocystis sp. (strain ATCC 27184 / PCC 6803 / Kazusa), this protein is Putative diflavin flavoprotein A 4 (dfa4).